A 359-amino-acid chain; its full sequence is Peptide chain release factor 1 (359 aa).

Glutamine 236 bears the N5-methylglutamine mark.

Belongs to the prokaryotic/mitochondrial release factor family. In terms of processing, methylated by PrmC. Methylation increases the termination efficiency of RF1.

Its subcellular location is the cytoplasm. Functionally, peptide chain release factor 1 directs the termination of translation in response to the peptide chain termination codons UAG and UAA. The protein is Peptide chain release factor 1 of Streptococcus pyogenes serotype M18 (strain MGAS8232).